The primary structure comprises 1129 residues: Inositol hexakisphosphate and diphosphoinositol-pentakisphosphate kinase 2 (1129 aa).

Ser44 is subject to Phosphoserine. 59–60 (KK) lines the substrate pocket. ATP-binding residues include Arg140, Lys193, His200, and Arg219. 219–220 (RK) provides a ligand contact to substrate. At Ser229 the chain carries Phosphoserine. ATP contacts are provided by residues 243-246 (EEFM) and 252-254 (DVK). Positions 254 and 268 each coordinate substrate. ATP is bound by residues Ser270, Asp315, and 327-329 (DVN). Residue 332 to 335 (SFVK) participates in substrate binding. The interval 377-448 (PTTSGTMMEL…VLDIARQLLM (72 aa)) is polyphosphoinositide-binding domain. The interval 904-945 (KGCEEDKNLPSGYGYRPASRENEGRRSLKTDDDEPHTSKRDE) is disordered. A compositionally biased stretch (basic and acidic residues) spans 921–945 (ASRENEGRRSLKTDDDEPHTSKRDE). Residues Ser1051, Ser1058, and Ser1066 each carry the phosphoserine modification. The interval 1070–1129 (YTPTKILPTPPAALKSSKASSKAAAGGPSQAMAPHTSSRKKSINSKTEGHEPKKSTGKKR) is disordered. The segment covering 1081–1098 (AALKSSKASSKAAAGGPS) has biased composition (low complexity). Phosphoserine is present on residues Ser1106 and Ser1107.

This sequence belongs to the histidine acid phosphatase family. VIP1 subfamily. As to expression, ubiquitously expressed. Expressed in the cochlear and vestibular sensory hair cells, supporting cells and spiral ganglion neurons.

It is found in the cytoplasm. The protein localises to the cytosol. The catalysed reaction is 1D-myo-inositol hexakisphosphate + ATP = 1-diphospho-1D-myo-inositol 2,3,4,5,6-pentakisphosphate + ADP. The enzyme catalyses 5-diphospho-1D-myo-inositol 1,2,3,4,6-pentakisphosphate + ATP + H(+) = 1,5-bis(diphospho)-1D-myo-inositol 2,3,4,6-tetrakisphosphate + ADP. Bifunctional inositol kinase that acts in concert with the IP6K kinases IP6K1, IP6K2 and IP6K3 to synthesize the diphosphate group-containing inositol pyrophosphates diphosphoinositol pentakisphosphate, PP-InsP5, and bis-diphosphoinositol tetrakisphosphate, (PP)2-InsP4. PP-InsP5 and (PP)2-InsP4, also respectively called InsP7 and InsP8, regulate a variety of cellular processes, including apoptosis, vesicle trafficking, cytoskeletal dynamics, exocytosis, insulin signaling and neutrophil activation. Phosphorylates inositol hexakisphosphate (InsP6) at position 1 to produce PP-InsP5 which is in turn phosphorylated by IP6Ks to produce (PP)2-InsP4. Alternatively, phosphorylates PP-InsP5 at position 1, produced by IP6Ks from InsP6, to produce (PP)2-InsP4. Required for normal hearing. The chain is Inositol hexakisphosphate and diphosphoinositol-pentakisphosphate kinase 2 from Mus musculus (Mouse).